Consider the following 21-residue polypeptide: ISDFDEYEPLNDADNNEVLDF.

Residues 1 to 21 (ISDFDEYEPLNDADNNEVLDF) are disordered.

Functionally, start or boost ecdysteroid synthesis in testis of larvae and pupae. This Lymantria dispar (Gypsy moth) protein is Testis ecdysiotropin peptide 1.